Reading from the N-terminus, the 2444-residue chain is Protein SON (2444 aa).

The residue at position 2 (alanine 2) is an N-acetylalanine. The residue at position 16 (lysine 16) is an N6-acetyllysine. The segment covering 23-37 has biased composition (polar residues); it reads ELSSGRSEGQLNGET. The tract at residues 23 to 58 is disordered; that stretch reads ELSSGRSEGQLNGETNPPIEGNQAGDTAASARSLPN. A Glycyl lysine isopeptide (Lys-Gly) (interchain with G-Cter in SUMO2) cross-link involves residue lysine 64. Residues 79–88 are compositionally biased toward basic and acidic residues; it reads YKPDLKEASR. Residues 79–155 are disordered; it reads YKPDLKEASR…GNLESDSFLK (77 aa). A Phosphoserine modification is found at serine 94. The span at 106–130 shows a compositional bias: basic residues; it reads KKSKKHKKHKNKKKKKKKEKEKKYK. Residues 131-155 show a composition bias toward basic and acidic residues; the sequence is RQPEESESKLKSHHDGNLESDSFLK. 4 positions are modified to phosphoserine: serine 142, serine 150, serine 152, and serine 158. An N6-acetyllysine modification is found at lysine 284. Disordered regions lie at residues 301–358 and 391–468; these read TLTI…ESLE and GPPV…PEPP. Composition is skewed to pro residues over residues 393–406 and 420–439; these read PVTP…PSAT and PELP…PSVT. Threonine 395 carries the phosphothreonine modification. The 13 X 10 AA tandem repeats of L-A-[ST]-[NSG]-[TS]-MDSQM stretch occupies residues 721 to 850; the sequence is LASNTMDSQM…LATSSMDSQM (130 aa). Positions 907–983 are 11 X 7 AA tandem repeats of [DR]-P-Y-R-[LI][AG][QHP]; it reads DPYRLAQDPY…IAPRPYRLAP (77 aa). Arginine 945 is subject to Omega-N-methylarginine. Threonine 954 is modified (phosphothreonine). A Phosphoserine modification is found at serine 993. 14 repeat units span residues 1001–1006, 1009–1014, 1016–1021, 1025–1030, 1033–1038, 1041–1046, 1050–1055, 1058–1063, 1066–1071, 1075–1080, 1084–1089, 1095–1100, 1106–1111, and 1115–1120. A 14 X 6 AA repeats of [ED]-R-S-M-M-S region spans residues 1001-1120; the sequence is ERSMMSSYER…SSYTDRSMMS (120 aa). Position 1002 is an asymmetric dimethylarginine (arginine 1002). Position 1017 is an asymmetric dimethylarginine (arginine 1017). A phosphoserine mark is found at serine 1030 and serine 1038. Residues serine 1055 and serine 1063 each carry the phosphoserine modification. Serine 1077 bears the Phosphoserine mark. The span at 1141 to 1168 shows a compositional bias: pro residues; it reads PPLPPEEPPTMPPLPPEEPPMTPPLPPE. Residues 1141-1173 form a 3 X 11 AA tandem repats of P-P-L-P-P-E-E-P-P-[TME]-[MTG] region; it reads PPLPPEEPPTMPPLPPEEPPMTPPLPPEEPPEG. The tract at residues 1141-1213 is disordered; the sequence is PPLPPEEPPT…PEPPVSQSEI (73 aa). Residues 1177 to 1213 show a composition bias toward polar residues; the sequence is STEQSALTADNTWSTEVTLSTGESLSQPEPPVSQSEI. Phosphoserine occurs at positions 1678, 1723, 1727, 1772, 1784, 1791, 1794, 1807, and 1808. Residues 1802–2072 are disordered; that stretch reads ERASESSSEE…RSPKRLTDLD (271 aa). Composition is skewed to basic and acidic residues over residues 1815–1826, 1834–1847, and 1855–1870; these read YEIFVKVKDTHE, RDKG…DSSL, and KSSE…ESRS. Basic residues-rich tracts occupy residues 1871–1934 and 1942–1973; these read RARK…RKRS and AARA…RRRS. 7 consecutive repeat copies span residues 1950–1956, 1959–1977, 1978–1984, 1985–1991, 1992–1998, 1999–2005, and 2006–2012. The 7 X 7 AA repeats of P-S-R-R-S-R-[TS] stretch occupies residues 1950–2019; the sequence is PSRRSRSHTP…SRTPSRRRRS (70 aa). A 2 X 19 AA repeats of P-S-R-R-R-R-S-R-S-V-V-R-R-R-S-F-S-I-S region spans residues 1959 to 2030; it reads PSRRRRSRSV…SAVRRRSFSI (72 aa). Serine 1973, serine 1975, and serine 1977 each carry phosphoserine. The segment covering 1980–2027 has biased composition (basic residues); sequence RRSRTPSRRSRTPSRRSRTPSRRSRTPSRRSRTPSRRRRSRSAVRRRS. A 2-7; approximate repeat occupies 2013–2019; that stretch reads PSRRRRS. A 3-2; approximate repeat occupies 2020 to 2030; that stretch reads RSAVRRRSFSI. Phosphoserine is present on residues serine 2027, serine 2029, serine 2031, serine 2047, and serine 2049. Residues 2031 to 2057 are 3 X tandem repeats of [ST]-P-[VLI]-R-[RL]-[RK]-[RF]-S-R; that stretch reads SPVRLRRSRTPLRRRFSRSPIRRKRSR. A compositionally biased stretch (basic residues) spans 2034 to 2056; sequence RLRRSRTPLRRRFSRSPIRRKRS. Over residues 2057–2072 the composition is skewed to basic and acidic residues; sequence RSSERGRSPKRLTDLD. Lysine 2073 bears the N6-acetyllysine; alternate mark. Residue lysine 2073 forms a Glycyl lysine isopeptide (Lys-Gly) (interchain with G-Cter in SUMO2); alternate linkage. A Glycyl lysine isopeptide (Lys-Gly) (interchain with G-Cter in SUMO2) cross-link involves residue lysine 2110. At serine 2147 the chain carries Phosphoserine. Lysine 2167 participates in a covalent cross-link: Glycyl lysine isopeptide (Lys-Gly) (interchain with G-Cter in SUMO2). Threonine 2181 bears the Phosphothreonine mark. The interval 2192–2238 is disordered; it reads EFPVSSGSQHRKKEADSVYGEWVPVEKNGEESKDDDNVFSSSLPSEP. Phosphoserine is present on serine 2256. A G-patch domain is found at 2323–2369; sequence TGGMGAVLMRKMGWREGEGLGKNKEGNKEPILVDFKTDRKGLVAVGE. In terms of domain architecture, DRBM spans 2389 to 2444; the sequence is HPVSALMEICNKRRWQPPEFLLVHDSGPDHRKHFLFRVLRNGSPYQPNCMFFLNRY.

Interacts with SRSF2. Associates with the spliceosome. Interacts with USH1G. In terms of tissue distribution, widely expressed. Highly expressed in brain, heart, spleen, liver, skeletal muscle, kidney and testis.

Its subcellular location is the nucleus speckle. Its function is as follows. RNA-binding protein that acts as a mRNA splicing cofactor by promoting efficient splicing of transcripts that possess weak splice sites. Specifically promotes splicing of many cell-cycle and DNA-repair transcripts that possess weak splice sites, such as TUBG1, KATNB1, TUBGCP2, AURKB, PCNT, AKT1, RAD23A, and FANCG. Probably acts by facilitating the interaction between Serine/arginine-rich proteins such as SRSF2 and the RNA polymerase II. Also binds to DNA; binds to the consensus DNA sequence: 5'-GA[GT]AN[CG][AG]CC-3'. Essential for correct RNA splicing of multiple genes critical for brain development, neuronal migration and metabolism, including TUBG1, FLNA, PNKP, WDR62, PSMD3, PCK2, PFKL, IDH2, and ACY1. May also regulate the ghrelin signaling in hypothalamic neuron by acting as a negative regulator of GHSR expression. This Mus musculus (Mouse) protein is Protein SON (Son).